Consider the following 459-residue polypeptide: Trigger factor (459 aa).

Residues 166-245 (GDFANIDLTA…VNSVKAEELP (80 aa)) form the PPIase FKBP-type domain.

This sequence belongs to the FKBP-type PPIase family. Tig subfamily.

Its subcellular location is the cytoplasm. It carries out the reaction [protein]-peptidylproline (omega=180) = [protein]-peptidylproline (omega=0). Involved in protein export. Acts as a chaperone by maintaining the newly synthesized protein in an open conformation. Functions as a peptidyl-prolyl cis-trans isomerase. This is Trigger factor from Bifidobacterium longum (strain DJO10A).